Here is a 123-residue protein sequence, read N- to C-terminus: Small ribosomal subunit protein uS12 (123 aa).

Residues 1 to 28 (MPTIQQLIRKPREPKRVRSKSQHLESCP) form a disordered region. D89 bears the 3-methylthioaspartic acid mark.

Belongs to the universal ribosomal protein uS12 family. Part of the 30S ribosomal subunit. Contacts proteins S8 and S17. May interact with IF1 in the 30S initiation complex.

Its function is as follows. With S4 and S5 plays an important role in translational accuracy. In terms of biological role, interacts with and stabilizes bases of the 16S rRNA that are involved in tRNA selection in the A site and with the mRNA backbone. Located at the interface of the 30S and 50S subunits, it traverses the body of the 30S subunit contacting proteins on the other side and probably holding the rRNA structure together. The combined cluster of proteins S8, S12 and S17 appears to hold together the shoulder and platform of the 30S subunit. The polypeptide is Small ribosomal subunit protein uS12 (Cereibacter sphaeroides (strain ATCC 17029 / ATH 2.4.9) (Rhodobacter sphaeroides)).